A 66-amino-acid chain; its full sequence is Large ribosomal subunit protein uL29 (66 aa).

This sequence belongs to the universal ribosomal protein uL29 family.

This Rhizobium etli (strain CIAT 652) protein is Large ribosomal subunit protein uL29.